The sequence spans 355 residues: UDP-N-acetylglucosamine--N-acetylmuramyl-(pentapeptide) pyrophosphoryl-undecaprenol N-acetylglucosamine transferase (355 aa).

UDP-N-acetyl-alpha-D-glucosamine-binding positions include 13–15, Asn-125, Arg-162, Ser-190, Ile-244, and Gln-289; that span reads TGG.

Belongs to the glycosyltransferase 28 family. MurG subfamily.

It is found in the cell inner membrane. The enzyme catalyses di-trans,octa-cis-undecaprenyl diphospho-N-acetyl-alpha-D-muramoyl-L-alanyl-D-glutamyl-meso-2,6-diaminopimeloyl-D-alanyl-D-alanine + UDP-N-acetyl-alpha-D-glucosamine = di-trans,octa-cis-undecaprenyl diphospho-[N-acetyl-alpha-D-glucosaminyl-(1-&gt;4)]-N-acetyl-alpha-D-muramoyl-L-alanyl-D-glutamyl-meso-2,6-diaminopimeloyl-D-alanyl-D-alanine + UDP + H(+). Its pathway is cell wall biogenesis; peptidoglycan biosynthesis. Functionally, cell wall formation. Catalyzes the transfer of a GlcNAc subunit on undecaprenyl-pyrophosphoryl-MurNAc-pentapeptide (lipid intermediate I) to form undecaprenyl-pyrophosphoryl-MurNAc-(pentapeptide)GlcNAc (lipid intermediate II). In Neisseria gonorrhoeae (strain ATCC 700825 / FA 1090), this protein is UDP-N-acetylglucosamine--N-acetylmuramyl-(pentapeptide) pyrophosphoryl-undecaprenol N-acetylglucosamine transferase.